A 230-amino-acid chain; its full sequence is MGVCTIFRWLFAAYLLSSYKSLPGAYFVRFYYYVIQNLFLPMFTGFETENIKKLEKNEYGCFSYTSLDTYASPFECDFYFHKSNSTYFAELDISRGNLMCKIFQKLMLNSKHYPYIPVANVFTNFLKEIKPFQKYSVSSRIICWDEKWIYVMSRFTIKKGTVLCSLSLTKYVLKDGRKTIKPKDALEYCGLYNEKVAKISEDNLKLLTERCGFHETVPLENLSQEYCSEI.

The protein belongs to the lcsJ thioesterase family.

This Saccharomyces cerevisiae (strain ATCC 204508 / S288c) (Baker's yeast) protein is Probable thioesterase YBR096W.